Consider the following 337-residue polypeptide: 4-hydroxythreonine-4-phosphate dehydrogenase (337 aa).

The substrate site is built by His138 and Thr139. His168, His212, and His267 together coordinate a divalent metal cation. The substrate site is built by Lys275, Asn284, and Arg293.

Belongs to the PdxA family. Homodimer. Requires Zn(2+) as cofactor. Mg(2+) serves as cofactor. It depends on Co(2+) as a cofactor.

It is found in the cytoplasm. It catalyses the reaction 4-(phosphooxy)-L-threonine + NAD(+) = 3-amino-2-oxopropyl phosphate + CO2 + NADH. Its pathway is cofactor biosynthesis; pyridoxine 5'-phosphate biosynthesis; pyridoxine 5'-phosphate from D-erythrose 4-phosphate: step 4/5. In terms of biological role, catalyzes the NAD(P)-dependent oxidation of 4-(phosphooxy)-L-threonine (HTP) into 2-amino-3-oxo-4-(phosphooxy)butyric acid which spontaneously decarboxylates to form 3-amino-2-oxopropyl phosphate (AHAP). This Beijerinckia indica subsp. indica (strain ATCC 9039 / DSM 1715 / NCIMB 8712) protein is 4-hydroxythreonine-4-phosphate dehydrogenase.